We begin with the raw amino-acid sequence, 77 residues long: Large ribosomal subunit protein uL24 (77 aa).

The protein belongs to the universal ribosomal protein uL24 family. Part of the 50S ribosomal subunit.

Functionally, one of two assembly initiator proteins, it binds directly to the 5'-end of the 23S rRNA, where it nucleates assembly of the 50S subunit. In terms of biological role, one of the proteins that surrounds the polypeptide exit tunnel on the outside of the subunit. This is Large ribosomal subunit protein uL24 from Campylobacter jejuni subsp. doylei (strain ATCC BAA-1458 / RM4099 / 269.97).